Here is a 134-residue protein sequence, read N- to C-terminus: GSH-induced LITAF domain protein (134 aa).

Residues 33–113 (DPLGAPIQQT…CGNKVADFEK (81 aa)) enclose the LITAF domain. Residues C53 and C56 each coordinate Zn(2+). The membrane-binding amphipathic helix stretch occupies residues 68 to 88 (PGVAAVVACMMPFMLGFCFLC). The Zn(2+) site is built by C101 and C104.

It belongs to the CDIP1/LITAF family. As to quaternary structure, interacts (via N- and C-terminal) with MIEL1 and LSD1 (via N-terminus).

Its subcellular location is the cell membrane. Its function is as follows. Acts as a membrane anchor, bringing other regulators of programmed cell death (PCD) to the plasma membrane. Negatively regulates hypersensitive cell death. In Arabidopsis thaliana (Mouse-ear cress), this protein is GSH-induced LITAF domain protein.